A 504-amino-acid polypeptide reads, in one-letter code: Ectoine/proline transporter ProP (504 aa).

Helical transmembrane passes span 41–61 (FMEW…TAVF), 71–91 (LLAV…GGLV), 118–138 (LIGL…LLYL), 169–189 (FFGA…ASVV), 207–227 (DFGW…AVYL), 272–292 (LLIG…LTSY), 309–329 (AAVT…VGMW), 337–357 (PVYA…FLIM), 362–382 (IGAV…YVAL), 399–419 (GMGI…PLIT), and 430–450 (IVPA…LLFM). The interval 477-504 (NQDEDPNIDLSHMPFPDEENVGAEKQNA) is disordered.

The protein belongs to the major facilitator superfamily.

Its subcellular location is the cell membrane. Its activity is regulated as follows. Uptake is activated by osmotic stress. Inhibited by CCCP. Its function is as follows. Involved in the uptake of osmoprotectants. Can transport ectoine and proline. Protons are probably the coupling ions. The sequence is that of Ectoine/proline transporter ProP from Corynebacterium glutamicum (strain ATCC 13032 / DSM 20300 / JCM 1318 / BCRC 11384 / CCUG 27702 / LMG 3730 / NBRC 12168 / NCIMB 10025 / NRRL B-2784 / 534).